A 225-amino-acid chain; its full sequence is Uridylate kinase (225 aa).

9 to 10 (GS) is a binding site for ATP. Gly46 contributes to the UMP binding site. 2 residues coordinate ATP: Gly47 and Arg51. Residues Asp67 and 115-121 (THPAHTT) each bind UMP. ATP contacts are provided by Thr141, Asn142, Tyr147, and Asp150.

This sequence belongs to the UMP kinase family. Homohexamer.

It localises to the cytoplasm. It carries out the reaction UMP + ATP = UDP + ADP. Its pathway is pyrimidine metabolism; CTP biosynthesis via de novo pathway; UDP from UMP (UMPK route): step 1/1. With respect to regulation, inhibited by UTP. In terms of biological role, catalyzes the reversible phosphorylation of UMP to UDP. This chain is Uridylate kinase, found in Methanococcus maripaludis (strain C7 / ATCC BAA-1331).